The primary structure comprises 327 residues: Methionyl-tRNA formyltransferase (327 aa).

Residue 117 to 120 (SLLP) participates in (6S)-5,6,7,8-tetrahydrofolate binding.

The protein belongs to the Fmt family.

The catalysed reaction is L-methionyl-tRNA(fMet) + (6R)-10-formyltetrahydrofolate = N-formyl-L-methionyl-tRNA(fMet) + (6S)-5,6,7,8-tetrahydrofolate + H(+). Functionally, attaches a formyl group to the free amino group of methionyl-tRNA(fMet). The formyl group appears to play a dual role in the initiator identity of N-formylmethionyl-tRNA by promoting its recognition by IF2 and preventing the misappropriation of this tRNA by the elongation apparatus. The chain is Methionyl-tRNA formyltransferase from Delftia acidovorans (strain DSM 14801 / SPH-1).